Reading from the N-terminus, the 112-residue chain is Large ribosomal subunit protein uL22 (112 aa).

It belongs to the universal ribosomal protein uL22 family. As to quaternary structure, part of the 50S ribosomal subunit.

Functionally, this protein binds specifically to 23S rRNA; its binding is stimulated by other ribosomal proteins, e.g. L4, L17, and L20. It is important during the early stages of 50S assembly. It makes multiple contacts with different domains of the 23S rRNA in the assembled 50S subunit and ribosome. The globular domain of the protein is located near the polypeptide exit tunnel on the outside of the subunit, while an extended beta-hairpin is found that lines the wall of the exit tunnel in the center of the 70S ribosome. The polypeptide is Large ribosomal subunit protein uL22 (Lawsonia intracellularis (strain PHE/MN1-00)).